The following is a 747-amino-acid chain: Zinc finger and BTB domain-containing protein 47 (747 aa).

The BTB domain occupies 15–83 (CDVDLVLVPQ…IYTSKLLVNA (69 aa)). Lys-190 is covalently cross-linked (Glycyl lysine isopeptide (Lys-Gly) (interchain with G-Cter in SUMO2)). The segment at 243–424 (QTLHVSTGPE…ARGPPATDGL (182 aa)) is disordered. Basic and acidic residues predominate over residues 267–277 (GREDGLQRHSD). Over residues 278 to 354 (EEEEDDEEEE…SEEEEGEEGE (77 aa)) the composition is skewed to acidic residues. The span at 380-398 (RSRENARRRGTPEPEEAGR) shows a compositional bias: basic and acidic residues. Residues 436–459 (HPCQKCPRVFNNRWYLEKHMNVTH) form a C2H2-type 1 zinc finger. The C2H2-type 2; degenerate zinc finger occupies 463–485 (QICDQCGKRFLLESELLLHRQTD). C2H2-type zinc fingers lie at residues 490-513 (IQCVTCGKAFKKLWSLHEHNKIVH), 520-542 (FSCEICEKKFYTMAHVRKHMVAH), 548-570 (FTCETCGKSFKRSMSLKVHSLQH), 576-598 (FRCENCNERFQYKYQLRSHMSIH), 604-626 (FMCQWCGKDFNMKQYFDEHMKTH), 632-654 (YICEICGKSFTSRPNMKRHRRTH), and 660-687 (YPCDVCGQRFRFSNMLKAHKEKCFRVSH). The interval 694-747 (VPAAPGLPPTQPQAHALPLLPGLPQTLPPPPHLPPPPPLFPTTASPGGRMNANN) is disordered. Pro residues predominate over residues 719–733 (TLPPPPHLPPPPPLF).

It belongs to the krueppel C2H2-type zinc-finger protein family.

Its subcellular location is the nucleus. May be involved in transcriptional regulation. This Homo sapiens (Human) protein is Zinc finger and BTB domain-containing protein 47 (ZBTB47).